Here is a 223-residue protein sequence, read N- to C-terminus: Putative N-acetylmannosamine-6-phosphate 2-epimerase (223 aa).

The protein belongs to the NanE family.

The catalysed reaction is an N-acyl-D-glucosamine 6-phosphate = an N-acyl-D-mannosamine 6-phosphate. It participates in amino-sugar metabolism; N-acetylneuraminate degradation; D-fructose 6-phosphate from N-acetylneuraminate: step 3/5. Converts N-acetylmannosamine-6-phosphate (ManNAc-6-P) to N-acetylglucosamine-6-phosphate (GlcNAc-6-P). In Staphylococcus haemolyticus (strain JCSC1435), this protein is Putative N-acetylmannosamine-6-phosphate 2-epimerase.